A 503-amino-acid polypeptide reads, in one-letter code: MEESQGYLELDKSRQHDFLYPLIFQEYIYVLAHDHGLNRSILLENLGSDNKFSSLIVKRLITRMYQQNRLIISANDSNQNPFLGHNKDLYSQMISEGFAVIVEIPFPLRLVSSLERKEIVKSHNLRSIHSVFPFLEDKFLHLNYVSDILIPHPIHLEILVQTLRYWVKDASSLHLLRFFLYEYRNWNSLINPKKSIFVFSKRNQRLFLFLYNSHVYEYESVFVFLRNQSSHLRSTSSGALLERIYFYGKIKHLVEAFANDFQASPWLFKDPFVHYVRYQGKSILASKGTPLLMNKWKYYLVNFWQCHFYVWSQPVRIYINQLSNHSFYFLGYLSSVGLNPSVVRNQMLENSFIIDNAIKKFDIIVPIIPLIGSLAKAKFCNVLGHPISKPARADSSDSDIIDRFVRICRNLSHYHSGSSKKKSLYRIKYILRLSCARTLARKHKSPVRAFLKRLGSELLEEFLTEEEQVLSLIVPASSTSRRLYRGRIWYLDIICINDLANHE.

This sequence belongs to the intron maturase 2 family. MatK subfamily.

It is found in the plastid. The protein localises to the chloroplast. In terms of biological role, usually encoded in the trnK tRNA gene intron. Probably assists in splicing its own and other chloroplast group II introns. The sequence is that of Maturase K from Liquidambar formosana (Formosan gum).